The primary structure comprises 924 residues: Protein argonaute 4 (924 aa).

Disordered regions lie at residues 1-37 and 159-185; these read MDST…PPNV and TRAN…RRPN. The segment covering 26-37 has biased composition (pro residues); sequence LPPPPPVIPPNV. The segment covering 162–173 has biased composition (low complexity); sequence NGNGSPNGNESP. Residues 292 to 408 form the PAZ domain; it reads PVVDFLIANQ…IPLELCALVP (117 aa). In terms of domain architecture, Piwi spans 577–885; it reads FILCVLPDKK…AAAQLGTFMK (309 aa). The Nuclear localization signal motif lies at 584 to 591; that stretch reads DKKNSDLY.

Belongs to the argonaute family. Ago subfamily. As to quaternary structure, interacts with NRPE1 (via C-terminus). Binding to NRPE1 is required for its function in RdDM. Interacts with turnip crinkle virus (TCV) capsid protein P38; this interaction inhibits probably RNA silencing ability of AGO4. Interacts with SDE3. Binds to RDM3. Binds chromatin at loci subject to transcriptional silencing. Interacts with MBD6. In terms of tissue distribution, expressed in embryos, mature leaves, vascular tissue of the sepals, stamens and stigma, at the tip of the style and siliques.

Its subcellular location is the nucleus. It is found in the nucleolus. The protein resides in the nucleoplasm. It localises to the cajal body. Functionally, together with RDM3, required for transcriptional gene silencing (TGS) by DNA methylation and repressive histone modifications (H3K9me2) of several chromatin loci. Component of the RISC complex that associate with the small interfering RNA (siRNA) pathway involved in direct cytosine methylation at endogenous DNA repeats. Forms a AGO4/NRPE1/siRNA complex in cajal body, facilitating its function in RNA-directed gene silencing of target loci. Required for CpNpG and asymmetric DNA methylation as well as histone H3 'Lys-9' methylation (H3K9me) at SUP and SN1 loci. May be not required for CpG methylation. Required for the production and maintenance of retrotransposon SN1 and Copia and ribosomal 5S 25 nucleotide siRNAs specialized in gene silencing at chromatin level. Involved in de novo methylation of FWA gene and required for the maintenance of RNA-directed DNA methylation (RdDM) triggered by inverted repeat transgenes. Interacts with miRNA miR390 and miR172, targeting respectively TAS3 and AP2 mRNAs, and mediates cleavage of miRNA targets. Associates mainly with small RNAs of 24 nucleotide in length and preferentially recruits small RNAs with a 5' terminal adenosine. Targeted by the turnip yellows virus (TuYV) protein P0 (via F-box-like domain) for probable proteasome degradation and thereby inactivating AGO4 function in RNA silencing. Required for resistance to the bacterial pathogen P.syringae. Works independently of the RdDM pathway in mediating resistance to P.syringae. RdDM is involved in viral genome methylation as an epigenetic defense against geminiviruses. In Arabidopsis thaliana (Mouse-ear cress), this protein is Protein argonaute 4.